The sequence spans 473 residues: MADGEESISVAWQSVLDKLETDDRITPQLHGFLSLVEPKGIMAGTFYLEVPNEFTRGMIEQRSRVPLLNAIGTLDNTLAVTTFAIVVNPEIQQESLSTVGEPEPTPAPYLDVATFTVAPPAEITAPPRNGDTRLNSKYSFDNFVIGQSNRFAHAAAVAVAEAPAKAYNPLFIYGDSGLGKTHLLHAIGHYAMSLYPGIRVRYVSSEEFTNDFINSIANNRGSSFQARYRNIDILLIDDIQFLQRAVETQEAFFHTFNTLHDHNKQVVITSDLPPKHLTGFEDRMRSRFEWGLITDVQVPDLETRIAILRKKAQSEKIQVPDDILEFMASKISSNIRELEGTLIRVTAFASLNRTPVDMPLVQTVLKDLITLDDDNVIAPTDIITNTAEYFKLTVDDLYGSSRSQAVATARQIAMYLCRELTNLSLPKIGQLFGGRDHTTVMYANKKISELMKERRSIYNQVTELTSRIKQNHR.

Residues methionine 1 to valine 87 form a domain I, interacts with DnaA modulators region. The tract at residues valine 87–threonine 132 is domain II. Residues arginine 133–alanine 349 form a domain III, AAA+ region region. ATP is bound by residues glycine 177, glycine 179, lysine 180, and threonine 181. The domain IV, binds dsDNA stretch occupies residues serine 350–arginine 473.

Belongs to the DnaA family. As to quaternary structure, oligomerizes as a right-handed, spiral filament on DNA at oriC.

It is found in the cytoplasm. Functionally, plays an essential role in the initiation and regulation of chromosomal replication. ATP-DnaA binds to the origin of replication (oriC) to initiate formation of the DNA replication initiation complex once per cell cycle. Binds the DnaA box (a 9 base pair repeat at the origin) and separates the double-stranded (ds)DNA. Forms a right-handed helical filament on oriC DNA; dsDNA binds to the exterior of the filament while single-stranded (ss)DNA is stabiized in the filament's interior. The ATP-DnaA-oriC complex binds and stabilizes one strand of the AT-rich DNA unwinding element (DUE), permitting loading of DNA polymerase. After initiation quickly degrades to an ADP-DnaA complex that is not apt for DNA replication. Binds acidic phospholipids. In Leifsonia xyli subsp. xyli (strain CTCB07), this protein is Chromosomal replication initiator protein DnaA.